The following is a 268-amino-acid chain: Mediator of RNA polymerase II transcription subunit 8-A (268 aa).

2 coiled-coil regions span residues 1-26 and 117-160; these read MQREEKQLEACLDALISQVSDIKNSL and VEEL…EERE. The disordered stretch occupies residues 190–268; that stretch reads GLSNRRPPGQ…KSASMHPYQR (79 aa). Positions 223–246 are enriched in polar residues; sequence VPMSLQSNQQQQHMAGVSMSQGNQ.

It belongs to the Mediator complex subunit 8 family. As to quaternary structure, component of the Mediator complex. May be part of a multisubunit E3 ubiquitin-protein ligase complex.

It is found in the nucleus. It functions in the pathway protein modification; protein ubiquitination. Component of the Mediator complex, a coactivator involved in the regulated transcription of nearly all RNA polymerase II-dependent genes. Mediator functions as a bridge to convey information from gene-specific regulatory proteins to the basal RNA polymerase II transcription machinery. Mediator is recruited to promoters by direct interactions with regulatory proteins and serves as a scaffold for the assembly of a functional preinitiation complex with RNA polymerase II and the general transcription factors. May play a role as a target recruitment subunit in E3 ubiquitin-protein ligase complexes and thus in ubiquitination and subsequent proteasomal degradation of target proteins. The chain is Mediator of RNA polymerase II transcription subunit 8-A (med8-a) from Xenopus laevis (African clawed frog).